The chain runs to 235 residues: Putative N-acetylmannosamine-6-phosphate 2-epimerase (235 aa).

The protein belongs to the NanE family.

The catalysed reaction is an N-acyl-D-glucosamine 6-phosphate = an N-acyl-D-mannosamine 6-phosphate. It participates in amino-sugar metabolism; N-acetylneuraminate degradation; D-fructose 6-phosphate from N-acetylneuraminate: step 3/5. Converts N-acetylmannosamine-6-phosphate (ManNAc-6-P) to N-acetylglucosamine-6-phosphate (GlcNAc-6-P). In Edwardsiella ictaluri (strain 93-146), this protein is Putative N-acetylmannosamine-6-phosphate 2-epimerase.